The primary structure comprises 172 residues: Cold-inducible RNA-binding protein (172 aa).

Residues G6–K84 form the RRM domain. Residues G69–E172 are disordered. 2 stretches are compositionally biased toward gly residues: residues Y93–G106 and F114–G125. Phosphoserine occurs at positions 130, 138, 146, 156, 159, and 163. Over residues S138 to E172 the composition is skewed to low complexity.

In terms of assembly, interacts with EIF4G1. Associates with ribosomes. Methylated on arginine residues. Methylation of the RGG motifs is a prerequisite for recruitment into SGs. Post-translationally, phosphorylated by CK2, GSK3A and GSK3B. Phosphorylation by GSK3B increases RNA-binding activity to the TXN 3'-UTR transcript upon exposure to UV radiation.

It localises to the nucleus. The protein resides in the nucleoplasm. It is found in the cytoplasm. Cold-inducible mRNA binding protein that plays a protective role in the genotoxic stress response by stabilizing transcripts of genes involved in cell survival. Acts as a translational activator. Seems to play an essential role in cold-induced suppression of cell proliferation. Binds specifically to the 3'-untranslated regions (3'-UTRs) of stress-responsive transcripts RPA2 and TXN. Acts as a translational repressor. Promotes assembly of stress granules (SGs), when overexpressed. The protein is Cold-inducible RNA-binding protein (CIRBP) of Pongo abelii (Sumatran orangutan).